A 488-amino-acid chain; its full sequence is N-succinylglutamate 5-semialdehyde dehydrogenase (488 aa).

221–226 contacts NAD(+); it reads GSSRTG. Residues Glu244 and Cys278 contribute to the active site.

It belongs to the aldehyde dehydrogenase family. AstD subfamily.

It catalyses the reaction N-succinyl-L-glutamate 5-semialdehyde + NAD(+) + H2O = N-succinyl-L-glutamate + NADH + 2 H(+). Its pathway is amino-acid degradation; L-arginine degradation via AST pathway; L-glutamate and succinate from L-arginine: step 4/5. Its function is as follows. Catalyzes the NAD-dependent reduction of succinylglutamate semialdehyde into succinylglutamate. The polypeptide is N-succinylglutamate 5-semialdehyde dehydrogenase (Pseudomonas fluorescens (strain ATCC BAA-477 / NRRL B-23932 / Pf-5)).